A 298-amino-acid polypeptide reads, in one-letter code: Porphobilinogen deaminase (298 aa).

Cys-239 carries the post-translational modification S-(dipyrrolylmethanemethyl)cysteine.

Belongs to the HMBS family. Monomer. It depends on dipyrromethane as a cofactor.

It carries out the reaction 4 porphobilinogen + H2O = hydroxymethylbilane + 4 NH4(+). The protein operates within porphyrin-containing compound metabolism; protoporphyrin-IX biosynthesis; coproporphyrinogen-III from 5-aminolevulinate: step 2/4. Its function is as follows. Tetrapolymerization of the monopyrrole PBG into the hydroxymethylbilane pre-uroporphyrinogen in several discrete steps. This chain is Porphobilinogen deaminase, found in Orientia tsutsugamushi (strain Boryong) (Rickettsia tsutsugamushi).